The primary structure comprises 761 residues: Phosphoribosylformylglycinamidine synthase subunit PurL (761 aa).

His-58 is an active-site residue. Positions 61 and 105 each coordinate ATP. Glu-107 contributes to the Mg(2+) binding site. Residues 108-111 (SHNH) and Arg-130 each bind substrate. His-109 acts as the Proton acceptor in catalysis. Asp-131 provides a ligand contact to Mg(2+). Gln-259 contributes to the substrate binding site. Asp-287 is a binding site for Mg(2+). 331-333 (ESQ) lines the substrate pocket. Residues Asn-519 and Gly-556 each contribute to the ATP site. A Mg(2+)-binding site is contributed by Asn-557. Ser-559 is a binding site for substrate.

Belongs to the FGAMS family. As to quaternary structure, monomer. Part of the FGAM synthase complex composed of 1 PurL, 1 PurQ and 2 PurS subunits.

It localises to the cytoplasm. The catalysed reaction is N(2)-formyl-N(1)-(5-phospho-beta-D-ribosyl)glycinamide + L-glutamine + ATP + H2O = 2-formamido-N(1)-(5-O-phospho-beta-D-ribosyl)acetamidine + L-glutamate + ADP + phosphate + H(+). It functions in the pathway purine metabolism; IMP biosynthesis via de novo pathway; 5-amino-1-(5-phospho-D-ribosyl)imidazole from N(2)-formyl-N(1)-(5-phospho-D-ribosyl)glycinamide: step 1/2. Part of the phosphoribosylformylglycinamidine synthase complex involved in the purines biosynthetic pathway. Catalyzes the ATP-dependent conversion of formylglycinamide ribonucleotide (FGAR) and glutamine to yield formylglycinamidine ribonucleotide (FGAM) and glutamate. The FGAM synthase complex is composed of three subunits. PurQ produces an ammonia molecule by converting glutamine to glutamate. PurL transfers the ammonia molecule to FGAR to form FGAM in an ATP-dependent manner. PurS interacts with PurQ and PurL and is thought to assist in the transfer of the ammonia molecule from PurQ to PurL. This Rhodococcus jostii (strain RHA1) protein is Phosphoribosylformylglycinamidine synthase subunit PurL.